Consider the following 213-residue polypeptide: tRNA (guanine-N(7)-)-methyltransferase (213 aa).

Glu-44, Asp-69, Asp-96, and Asp-118 together coordinate S-adenosyl-L-methionine. Asp-118 is a catalytic residue. Lys-122 contacts substrate. Residues 124-129 (RHEKRR) form an interaction with RNA region. Substrate is bound by residues Asp-154 and 191–194 (TEYE).

The protein belongs to the class I-like SAM-binding methyltransferase superfamily. TrmB family.

It carries out the reaction guanosine(46) in tRNA + S-adenosyl-L-methionine = N(7)-methylguanosine(46) in tRNA + S-adenosyl-L-homocysteine. It participates in tRNA modification; N(7)-methylguanine-tRNA biosynthesis. Catalyzes the formation of N(7)-methylguanine at position 46 (m7G46) in tRNA. This Streptococcus thermophilus (strain CNRZ 1066) protein is tRNA (guanine-N(7)-)-methyltransferase.